A 144-amino-acid polypeptide reads, in one-letter code: Large ribosomal subunit protein uL11 (144 aa).

Belongs to the universal ribosomal protein uL11 family. As to quaternary structure, part of the ribosomal stalk of the 50S ribosomal subunit. Interacts with L10 and the large rRNA to form the base of the stalk. L10 forms an elongated spine to which L12 dimers bind in a sequential fashion forming a multimeric L10(L12)X complex. Post-translationally, one or more lysine residues are methylated.

Functionally, forms part of the ribosomal stalk which helps the ribosome interact with GTP-bound translation factors. The chain is Large ribosomal subunit protein uL11 from Corynebacterium efficiens (strain DSM 44549 / YS-314 / AJ 12310 / JCM 11189 / NBRC 100395).